The sequence spans 121 residues: MARIAGINIPPHQHTEIGLTAIYGIGRTRARKICEACGIAYSKKVKELTDADLEKIRDQIAQFTIEGDLRRETTMNIKRLMDIGCYRGFRHRRGLPMRGQRTRTNARTRKGPRKGAAALKK.

The disordered stretch occupies residues 93–121; it reads RGLPMRGQRTRTNARTRKGPRKGAAALKK.

This sequence belongs to the universal ribosomal protein uS13 family. In terms of assembly, part of the 30S ribosomal subunit. Forms a loose heterodimer with protein S19. Forms two bridges to the 50S subunit in the 70S ribosome.

Functionally, located at the top of the head of the 30S subunit, it contacts several helices of the 16S rRNA. In the 70S ribosome it contacts the 23S rRNA (bridge B1a) and protein L5 of the 50S subunit (bridge B1b), connecting the 2 subunits; these bridges are implicated in subunit movement. Contacts the tRNAs in the A and P-sites. The polypeptide is Small ribosomal subunit protein uS13 (Acidovorax ebreus (strain TPSY) (Diaphorobacter sp. (strain TPSY))).